A 209-amino-acid chain; its full sequence is 3-demethoxyubiquinol 3-hydroxylase (209 aa).

Fe cation contacts are provided by glutamate 58, glutamate 88, histidine 91, glutamate 140, glutamate 172, and histidine 175.

The protein belongs to the COQ7 family. It depends on Fe cation as a cofactor.

The protein localises to the cell membrane. The catalysed reaction is a 5-methoxy-2-methyl-3-(all-trans-polyprenyl)benzene-1,4-diol + AH2 + O2 = a 3-demethylubiquinol + A + H2O. Its pathway is cofactor biosynthesis; ubiquinone biosynthesis. Catalyzes the hydroxylation of 2-nonaprenyl-3-methyl-6-methoxy-1,4-benzoquinol during ubiquinone biosynthesis. In Polynucleobacter necessarius subsp. necessarius (strain STIR1), this protein is 3-demethoxyubiquinol 3-hydroxylase.